The sequence spans 203 residues: Imidazole glycerol phosphate synthase subunit HisH (203 aa).

Residues 1-203 (MIGIIDYGMG…KNFGEMIKCL (203 aa)) enclose the Glutamine amidotransferase type-1 domain. The Nucleophile role is filled by Cys79. Active-site residues include His181 and Glu183.

Heterodimer of HisH and HisF.

The protein localises to the cytoplasm. It carries out the reaction 5-[(5-phospho-1-deoxy-D-ribulos-1-ylimino)methylamino]-1-(5-phospho-beta-D-ribosyl)imidazole-4-carboxamide + L-glutamine = D-erythro-1-(imidazol-4-yl)glycerol 3-phosphate + 5-amino-1-(5-phospho-beta-D-ribosyl)imidazole-4-carboxamide + L-glutamate + H(+). The enzyme catalyses L-glutamine + H2O = L-glutamate + NH4(+). It functions in the pathway amino-acid biosynthesis; L-histidine biosynthesis; L-histidine from 5-phospho-alpha-D-ribose 1-diphosphate: step 5/9. Functionally, IGPS catalyzes the conversion of PRFAR and glutamine to IGP, AICAR and glutamate. The HisH subunit catalyzes the hydrolysis of glutamine to glutamate and ammonia as part of the synthesis of IGP and AICAR. The resulting ammonia molecule is channeled to the active site of HisF. The chain is Imidazole glycerol phosphate synthase subunit HisH from Caldanaerobacter subterraneus subsp. tengcongensis (strain DSM 15242 / JCM 11007 / NBRC 100824 / MB4) (Thermoanaerobacter tengcongensis).